The primary structure comprises 458 residues: MAGSPSRAAGRRLQLPLLCLFLQGATAVLFAVFVRYNHKTDAALWHRSNHSNADNEFYFRYPSFQDVHAMVFVGFGFLMVFLQRYGFSSVGFTFLLAAFALQWSTLVQGFLHSFHGGHIHVGVESMINADFCAGAVLISFGAVLGKTGPAQLLLMALLEVVLFGINEFVLLHLLGVRDAGGSMTIHTFGAYFGLVLSRVLYRPQLEKSKHRQGSVYHSDLFAMIGTIFLWIFWPSFNAALTALGAGQHRTALNTYYSLAASTLGTFALSALVGEDGRLDMVHIQNAALAGGVVVGTSSEMMLTPFGALTAGFLAGTVSTLGYKFFRPILESKFKVQDTCGVHNLHGMPGVLGALLGVLVAGLATHEAYGDGLESVFPLIAEGQRSATSQAMHQLFGLFVTLMFASVGGGLGGLLLKLPFLDSPPDSQCYEDQVHWQVPGEHEDKAQRPLRVEEADTQA.

Topologically, residues 1 to 13 (MAGSPSRAAGRRL) are cytoplasmic. The chain crosses the membrane as a helical span at residues 14–34 (QLPLLCLFLQGATAVLFAVFV). Residues 35 to 61 (RYNHKTDAALWHRSNHSNADNEFYFRY) are Extracellular-facing. Residue asparagine 49 is glycosylated (N-linked (GlcNAc...) asparagine). Residues 62–82 (PSFQDVHAMVFVGFGFLMVFL) form a helical membrane-spanning segment. Over 83-86 (QRYG) the chain is Cytoplasmic. A helical membrane pass occupies residues 87-107 (FSSVGFTFLLAAFALQWSTLV). Residues 108–124 (QGFLHSFHGGHIHVGVE) are Extracellular-facing. Residues 125–145 (SMINADFCAGAVLISFGAVLG) traverse the membrane as a helical segment. At 146 to 149 (KTGP) the chain is on the cytoplasmic side. Residues 150-170 (AQLLLMALLEVVLFGINEFVL) traverse the membrane as a helical segment. Residues 171–178 (LHLLGVRD) are Extracellular-facing. A helical membrane pass occupies residues 179-201 (AGGSMTIHTFGAYFGLVLSRVLY). The Cytoplasmic segment spans residues 202–219 (RPQLEKSKHRQGSVYHSD). A helical membrane pass occupies residues 220–240 (LFAMIGTIFLWIFWPSFNAAL). The Extracellular portion of the chain corresponds to 241 to 251 (TALGAGQHRTA). The helical transmembrane segment at 252 to 272 (LNTYYSLAASTLGTFALSALV) threads the bilayer. Over 273–282 (GEDGRLDMVH) the chain is Cytoplasmic. The helical transmembrane segment at 283–303 (IQNAALAGGVVVGTSSEMMLT) threads the bilayer. Residue proline 304 is a topological domain, extracellular. A helical transmembrane segment spans residues 305–325 (FGALTAGFLAGTVSTLGYKFF). Residues 326–346 (RPILESKFKVQDTCGVHNLHG) lie on the Cytoplasmic side of the membrane. A helical membrane pass occupies residues 347–367 (MPGVLGALLGVLVAGLATHEA). At 368–393 (YGDGLESVFPLIAEGQRSATSQAMHQ) the chain is on the extracellular side. The chain crosses the membrane as a helical span at residues 394-414 (LFGLFVTLMFASVGGGLGGLL). The Cytoplasmic portion of the chain corresponds to 415–458 (LKLPFLDSPPDSQCYEDQVHWQVPGEHEDKAQRPLRVEEADTQA). The segment at 416-424 (KLPFLDSPP) is interaction with ANK3. The Basolateral sorting signal signature appears at 429–432 (YEDQ). Residues 439-458 (GEHEDKAQRPLRVEEADTQA) form a disordered region.

It belongs to the ammonium transporter (TC 2.A.49) family. Rh subfamily. Interacts (via C-terminus) with ANK2 and ANK3; required for targeting to the basolateral membrane. N-glycosylated.

Its subcellular location is the cell membrane. The protein localises to the basolateral cell membrane. The catalysed reaction is NH4(+)(in) = NH4(+)(out). It catalyses the reaction methylamine(out) = methylamine(in). It carries out the reaction CO2(out) = CO2(in). Ammonium transporter involved in the maintenance of acid-base homeostasis. Transports ammonium and its related derivative methylammonium across the basolateral plasma membrane of epithelial cells likely contributing to renal transepithelial ammonia transport and ammonia metabolism. May transport either NH4(+) or NH3 ammonia species predominantly mediating an electrogenic NH4(+) transport. May act as a CO2 channel providing for renal acid secretion. This is Ammonium transporter Rh type B (RHBG) from Pan troglodytes (Chimpanzee).